Here is a 414-residue protein sequence, read N- to C-terminus: Testis-specific Y-encoded-like protein 4 (414 aa).

2 disordered regions span residues 1–129 (MSGL…AGQK) and 391–414 (PRRGIRGPPRQPVESARSFRFQSG). A compositionally biased stretch (basic and acidic residues) spans 24–40 (ASGDPDRDQCQGLREET). The segment covering 101–112 (EAASAAEAADSS) has biased composition (low complexity).

The protein belongs to the nucleosome assembly protein (NAP) family.

The protein is Testis-specific Y-encoded-like protein 4 (TSPYL4) of Homo sapiens (Human).